We begin with the raw amino-acid sequence, 372 residues long: tRNA-specific 2-thiouridylase MnmA (372 aa).

Residues 13 to 20 and Met-39 each bind ATP; that span reads GMSGGVDS. The interval 99-101 is interaction with target base in tRNA; that stretch reads NPD. Cys-104 functions as the Nucleophile in the catalytic mechanism. An intrachain disulfide couples Cys-104 to Cys-200. Residue Gly-128 coordinates ATP. The interval 150–152 is interaction with tRNA; that stretch reads KDQ. Catalysis depends on Cys-200, which acts as the Cysteine persulfide intermediate. The interaction with tRNA stretch occupies residues 310 to 311; the sequence is RY.

The protein belongs to the MnmA/TRMU family.

Its subcellular location is the cytoplasm. The enzyme catalyses S-sulfanyl-L-cysteinyl-[protein] + uridine(34) in tRNA + AH2 + ATP = 2-thiouridine(34) in tRNA + L-cysteinyl-[protein] + A + AMP + diphosphate + H(+). In terms of biological role, catalyzes the 2-thiolation of uridine at the wobble position (U34) of tRNA, leading to the formation of s(2)U34. This is tRNA-specific 2-thiouridylase MnmA from Bacillus pumilus (strain SAFR-032).